The chain runs to 3795 residues: NBPF family member NBPF10 (3795 aa).

A coiled-coil region spans residues 75–119 (RQFKEEKLAEQLKQAEELRQYKVLVHSQERELTQLREKLREGRDA). The interval 161-200 (KLSPENDEDEDEDVQVEEAEKVLESSAPREVQKAEESKVP) is disordered. Residues 165-177 (ENDEDEDEDVQVE) are compositionally biased toward acidic residues. The Olduvai 1 domain maps to 165–259 (ENDEDEDEDV…ECQDALNILP (95 aa)). Over residues 190 to 200 (EVQKAEESKVP) the composition is skewed to basic and acidic residues. Residues 346-390 (RQFKEEKLAEQLKQAEELRQYKVLVHAQERELTQLKEKLREGRDA) adopt a coiled-coil conformation. Olduvai domains are found at residues 436–528 (ENDN…HIIP), 529–600 (ENES…VDIG), 601–692 (RHRW…PSCP), 695–750 (SREL…LDVD), 751–843 (RIKK…RSKK), 844–936 (ERRR…PSCP), 939–994 (SREL…LDVD), 995–1087 (RIKK…RSKK), 1088–1180 (ERRR…PSCP), 1183–1238 (SREL…LDVD), 1239–1331 (RIKK…RSKK), 1332–1424 (ERRR…PSCP), 1427–1482 (SREL…LDVD), 1483–1575 (RIKK…RSKK), 1576–1668 (ERRR…PSCP), 1671–1726 (SREL…LDVD), 1727–1819 (RIKK…RSKK), 1820–1912 (ERRR…PSCP), 1915–1970 (SREL…LDVD), 1971–2063 (RIKK…RSKK), 2064–2156 (ERRR…PSCP), 2159–2214 (SREL…LDVD), 2215–2307 (RIKK…RSKK), 2308–2400 (ERRR…PSCP), 2403–2458 (SREL…LDVD), 2459–2551 (RIKK…RSKK), 2552–2644 (ERRR…PSCP), 2647–2702 (SREL…LDVD), 2703–2795 (RIKK…RSKK), 2796–2888 (ERRR…PSCP), 2891–2946 (SREL…LDVD), 2947–3039 (RIKK…RSKK), 3040–3132 (ERRR…PSCP), 3135–3190 (SREL…LDVD), 3191–3283 (RIKK…RSKK), 3284–3376 (ERRR…PSCP), 3379–3434 (SREL…LDVD), 3435–3527 (RIKK…RSKK), 3528–3620 (ERRR…PSCP), 3623–3696 (SREL…RSKK), and 3697–3795 (ERRR…IFPQ). 2 disordered regions span residues 451–475 (EKVQKSSAPREMQKAEEKEVPEDSL) and 520–566 (WEDA…EGYS). Composition is skewed to acidic residues over residues 530 to 539 (NESDDEEEEE) and 550 to 562 (ESEEEEVPQESWD). A disordered region spans residues 830 to 868 (KGKGKKRRGRRSKKERRRGRKEGEEDQNPPCPRLSRELL). Residues 831–849 (GKGKKRRGRRSKKERRRGR) are compositionally biased toward basic residues. Positions 1073–1109 (KKGKGKKRRGRRSKKERRRGRKEGEEDQNPPCPRLSR) are disordered. The segment covering 1075–1093 (GKGKKRRGRRSKKERRRGR) has biased composition (basic residues). Disordered stretches follow at residues 1242-1261 (KDEEEEEDQDPPCPRLSREL) and 1318-1353 (KGKGKKRRGRRSKKERRRGRKEGEEDQNPPCPRLSR). The segment covering 1319-1337 (GKGKKRRGRRSKKERRRGR) has biased composition (basic residues). The interval 1562–1600 (KGKGKKRRGRRSKKERRRGRKEGEEDQNPPCPRLSRELL) is disordered. Basic residues predominate over residues 1563–1581 (GKGKKRRGRRSKKERRRGR). The interval 1806–1844 (KGKGKKRRGRRSKKERRRGRKEGEEDQNPPCPRLSRELL) is disordered. Residues 1807 to 1825 (GKGKKRRGRRSKKERRRGR) are compositionally biased toward basic residues. The tract at residues 2050 to 2088 (KGKGKKRRGRRSKKERRRGRKEGEEDQNPPCPRLSRELL) is disordered. Basic residues predominate over residues 2051-2069 (GKGKKRRGRRSKKERRRGR). The segment at 2294 to 2332 (KGKGKKRRGRRSKKERRRGRKEGEEDQNPPCPRLSRELL) is disordered. The span at 2295–2313 (GKGKKRRGRRSKKERRRGR) shows a compositional bias: basic residues. Positions 2538-2576 (KGKGKKRRGRRSKKERRRGRKEGEEDQNPPCPRLSRELL) are disordered. Residues 2539 to 2557 (GKGKKRRGRRSKKERRRGR) are compositionally biased toward basic residues. Residues 2782 to 2820 (KGKGKKRRGRRSKKERRRGRKEGEEDQNPPCPRLSRELL) are disordered. A compositionally biased stretch (basic residues) spans 2783-2801 (GKGKKRRGRRSKKERRRGR). The disordered stretch occupies residues 3026 to 3064 (KGKGKKRRGRRSKKERRRGRKEGEEDQNPPCPRLSRELL). A compositionally biased stretch (basic residues) spans 3027–3045 (GKGKKRRGRRSKKERRRGR). Disordered stretches follow at residues 3194 to 3213 (KDEEEEEDQDPPCPRLSREL) and 3270 to 3308 (KGKGKKRRGRRSKKERRRGRKEGEEDQNPPCPRLSRELL). A compositionally biased stretch (basic residues) spans 3271 to 3289 (GKGKKRRGRRSKKERRRGR). Disordered stretches follow at residues 3514–3552 (KGKGKKRRGRRSKKERRRGRKEGEEDQNPPCPRLSRELL) and 3684–3716 (GKGKKRRGRRSKKERRRGRKEGEEDQNPPCPRL). Basic residues-rich tracts occupy residues 3515 to 3533 (GKGKKRRGRRSKKERRRGR) and 3684 to 3702 (GKGKKRRGRRSKKERRRGR).

It belongs to the NBPF family.

It localises to the cytoplasm. In Homo sapiens (Human), this protein is NBPF family member NBPF10.